The primary structure comprises 237 residues: Ribonuclease PH (237 aa).

Residues arginine 86 and 124–126 (GTR) contribute to the phosphate site.

The protein belongs to the RNase PH family. Homohexameric ring arranged as a trimer of dimers.

It catalyses the reaction tRNA(n+1) + phosphate = tRNA(n) + a ribonucleoside 5'-diphosphate. Phosphorolytic 3'-5' exoribonuclease that plays an important role in tRNA 3'-end maturation. Removes nucleotide residues following the 3'-CCA terminus of tRNAs; can also add nucleotides to the ends of RNA molecules by using nucleoside diphosphates as substrates, but this may not be physiologically important. Probably plays a role in initiation of 16S rRNA degradation (leading to ribosome degradation) during starvation. The polypeptide is Ribonuclease PH (Bradyrhizobium sp. (strain BTAi1 / ATCC BAA-1182)).